We begin with the raw amino-acid sequence, 441 residues long: Ribosomal protein uS12 methylthiotransferase RimO (441 aa).

Residues 8-118 (PKIGFVSLGC…VLEHVHHYVP (111 aa)) enclose the MTTase N-terminal domain. [4Fe-4S] cluster contacts are provided by C17, C53, C82, C150, C154, and C157. Residues 136–373 (LTPRHYAYLK…MQLQQQISAE (238 aa)) enclose the Radical SAM core domain. The 66-residue stretch at 376-441 (QEKVGKEILV…DEYDLWGSRV (66 aa)) folds into the TRAM domain.

It belongs to the methylthiotransferase family. RimO subfamily. [4Fe-4S] cluster serves as cofactor.

It is found in the cytoplasm. It carries out the reaction L-aspartate(89)-[ribosomal protein uS12]-hydrogen + (sulfur carrier)-SH + AH2 + 2 S-adenosyl-L-methionine = 3-methylsulfanyl-L-aspartate(89)-[ribosomal protein uS12]-hydrogen + (sulfur carrier)-H + 5'-deoxyadenosine + L-methionine + A + S-adenosyl-L-homocysteine + 2 H(+). Its function is as follows. Catalyzes the methylthiolation of an aspartic acid residue of ribosomal protein uS12. This Escherichia fergusonii (strain ATCC 35469 / DSM 13698 / CCUG 18766 / IAM 14443 / JCM 21226 / LMG 7866 / NBRC 102419 / NCTC 12128 / CDC 0568-73) protein is Ribosomal protein uS12 methylthiotransferase RimO.